Reading from the N-terminus, the 1438-residue chain is DNA polymerase III PolC-type (1438 aa).

An Exonuclease domain is found at 422–578; it reads YVVFDVETTG…YDTEATAYIF (157 aa).

Belongs to the DNA polymerase type-C family. PolC subfamily.

The protein resides in the cytoplasm. The enzyme catalyses DNA(n) + a 2'-deoxyribonucleoside 5'-triphosphate = DNA(n+1) + diphosphate. Functionally, required for replicative DNA synthesis. This DNA polymerase also exhibits 3' to 5' exonuclease activity. This is DNA polymerase III PolC-type from Staphylococcus aureus (strain bovine RF122 / ET3-1).